Here is a 785-residue protein sequence, read N- to C-terminus: Putative lipase C4A8.10 (785 aa).

Disordered regions lie at residues 29-99 (HSAT…SSDF) and 115-140 (NTNA…VGTS). Over residues 32-41 (TSSTTVPPTV) the composition is skewed to low complexity. Positions 47–58 (TKKESGSIEDRA) are enriched in basic and acidic residues. Positions 63–86 (MTISSGENISKQISENNSSTNPKH) are enriched in polar residues. 2 stretches are compositionally biased toward low complexity: residues 89–99 (SESSPLLSSDF) and 127–140 (GVSH…VGTS). Ser390 (charge relay system) is an active-site residue.

It belongs to the putative lipase ROG1 family.

The sequence is that of Putative lipase C4A8.10 from Schizosaccharomyces pombe (strain 972 / ATCC 24843) (Fission yeast).